A 340-amino-acid chain; its full sequence is Anthranilate phosphoribosyltransferase (340 aa).

Residues glycine 80, 83–84 (GD), threonine 88, 90–93 (NIST), 108–116 (KHGNRAMSS), and serine 120 each bind 5-phospho-alpha-D-ribose 1-diphosphate. An anthranilate-binding site is contributed by glycine 80. Serine 92 contributes to the Mg(2+) binding site. Anthranilate is bound at residue asparagine 111. Arginine 166 contacts anthranilate. Aspartate 225 and glutamate 226 together coordinate Mg(2+).

It belongs to the anthranilate phosphoribosyltransferase family. Homodimer. Mg(2+) serves as cofactor.

The catalysed reaction is N-(5-phospho-beta-D-ribosyl)anthranilate + diphosphate = 5-phospho-alpha-D-ribose 1-diphosphate + anthranilate. It participates in amino-acid biosynthesis; L-tryptophan biosynthesis; L-tryptophan from chorismate: step 2/5. Catalyzes the transfer of the phosphoribosyl group of 5-phosphorylribose-1-pyrophosphate (PRPP) to anthranilate to yield N-(5'-phosphoribosyl)-anthranilate (PRA). The sequence is that of Anthranilate phosphoribosyltransferase from Roseiflexus castenholzii (strain DSM 13941 / HLO8).